A 218-amino-acid polypeptide reads, in one-letter code: MRIILLGAPGAGKGTQAQFISTAFNIPQISTGDMLRAAIQAQTPLGLEAKKVMDDGKLVSDEIILKLVKERINEPDCQQGCLFDGFPRTLAQAEALRQENITINHVIEIDVDNEEIIQRMSGRRVHLASGRTYHVIFNPPKKEGVDDITGEPLIQREDDTEETVRKRLEIYHNQTAPLIDYYREWEEKDLLQAPKFSSIKGSGSVEEIREKIFTELNA.

10-15 is an ATP binding site; sequence GAGKGT. The tract at residues 30 to 59 is NMP; the sequence is STGDMLRAAIQAQTPLGLEAKKVMDDGKLV. AMP-binding positions include Thr31, Arg36, 57–59, 85–88, and Gln92; these read KLV and GFPR. Residues 122-159 form an LID region; the sequence is GRRVHLASGRTYHVIFNPPKKEGVDDITGEPLIQREDD. ATP-binding positions include Arg123 and 132–133; that span reads TY. Positions 156 and 167 each coordinate AMP. An ATP-binding site is contributed by Gly203.

The protein belongs to the adenylate kinase family. In terms of assembly, monomer.

The protein localises to the cytoplasm. The enzyme catalyses AMP + ATP = 2 ADP. Its pathway is purine metabolism; AMP biosynthesis via salvage pathway; AMP from ADP: step 1/1. Catalyzes the reversible transfer of the terminal phosphate group between ATP and AMP. Plays an important role in cellular energy homeostasis and in adenine nucleotide metabolism. The protein is Adenylate kinase of Prosthecochloris aestuarii (strain DSM 271 / SK 413).